Consider the following 240-residue polypeptide: MRERRKIYEGKAKILFSFPDNPNLVTQHFKDDVTAYNNRKHSVIPGKGVINNYISAFFMQNLQNVGIKTHFVKVLNMREQLVKKAELIPIEVVIRNIVAGGLAKRLGLEEGMILDAPLIETYYKSDSLGDPMVTDDHILSFNWLKLSEIEEMKVMAWRINDFLSGALSSAGIILVDLKLEFGFYDDQIILIDEISPDTCRFWDTETKEKMDKDRFRRDLGGVSKYYREVARRLGILNGSF.

It belongs to the SAICAR synthetase family.

It catalyses the reaction 5-amino-1-(5-phospho-D-ribosyl)imidazole-4-carboxylate + L-aspartate + ATP = (2S)-2-[5-amino-1-(5-phospho-beta-D-ribosyl)imidazole-4-carboxamido]succinate + ADP + phosphate + 2 H(+). It participates in purine metabolism; IMP biosynthesis via de novo pathway; 5-amino-1-(5-phospho-D-ribosyl)imidazole-4-carboxamide from 5-amino-1-(5-phospho-D-ribosyl)imidazole-4-carboxylate: step 1/2. The chain is Phosphoribosylaminoimidazole-succinocarboxamide synthase from Neorickettsia sennetsu (strain ATCC VR-367 / Miyayama) (Ehrlichia sennetsu).